A 514-amino-acid polypeptide reads, in one-letter code: MTRKNVLLIVVDQWRADFIPHLMRAEGREPFLKTPNLDRLCREGLTFRNHVTTCVPCGPARASLLTGLYLMNHRAVQNTVPLDQRHLNLGKALRAIGYDPALIGYTTTTPDPRTTSARDPRFTVLGDIMDGFRSVGAFEPNMEGYFGWVAQNGFELPENREDIWLPEGEHSVPGATDKPSRIPKEFSDSTFFTERALTYLKGRDGKPFFLHLGYYRPHPPFVASAPYHAMYKAEDMPAPIRAENPDAEAAQHPLMKHYIDHIRRGSFFHGAEGSGATLDEGEIRQMRATYCGLITEIDDCLGRVFAYLDETGQWDDTLIIFTSDHGEQLGDHHLLGKIGYNAESFRIPLVIKDAGQNRHAGQIEEGFSESIDVMPTILEWLGGETPRACDGRSLLPFLAEGKPSDWRTELHYEFDFRDVFYDQPQNSVQLSQDDCSLCVIEDENYKYVHFAALPPLFFDLKADPHEFSNLAGDPAYAALVRDYAQKALSWRLSHADRTLTHYRSSPQGLTTRNH.

Mn(2+) contacts are provided by Asp12, Cys57, Asp324, and His325. Cys57 functions as the Nucleophile in the catalytic mechanism. Position 57 is a 3-oxoalanine (Cys) (Cys57).

Belongs to the alkaline phosphatase superfamily. As to quaternary structure, homotetramer. Mn(2+) is required as a cofactor. In terms of processing, the conversion to 3-oxoalanine (also known as C-formylglycine, FGly), of a serine or cysteine residue in prokaryotes and of a cysteine residue in eukaryotes, is critical for catalytic activity. Phosphate triester hydrolytic activity is retained with unmodified cysteine acting as a nucleophile.

Its activity is regulated as follows. Anions including Cl(-) and CH3COO(-), and SO4(2-) salts stimulate activity 20-40% at 100 mM. Functionally, hydrolytic enzyme with a broad substrate specificity acting on phosphate diesters and phosphonate monoesters. Hydrolyzes phosphate mono- and triesters, sulfate monoesters and sulfonate monoesters. Hydrolyzes glyphosate monoesters. Does not hydrolyze DNA or cGMP. Hydrolyzes glyceryl glyphosate, but this substrate has a much lower affinity than the glyphosate monoesters. In Trinickia caryophylli (Paraburkholderia caryophylli), this protein is Multifunctional alkaline phosphatase superfamily protein PehA.